A 612-amino-acid polypeptide reads, in one-letter code: Sulfite reductase [NADPH] flavoprotein alpha-component (612 aa).

The Flavodoxin-like domain maps to 64–202; the sequence is VTLISASQTG…QAQQWRQQVV (139 aa). FMN is bound by residues 70-75, 117-120, and 153-162; these read SQTGNA, STQG, and LGDTSYEHFC. The FAD-binding FR-type domain occupies 247-461; that stretch reads TAPLTAQLSV…IEHNDNFRLP (215 aa). FAD is bound by residues threonine 335, lysine 369, 399–402, 417–419, tyrosine 423, and 432–435; these read RLYS, TVG, and GGAS. NADP(+) is bound by residues 532–533, 538–542, and aspartate 574; these read SR and KIYVQ. Tyrosine 612 contributes to the FAD binding site.

This sequence belongs to the NADPH-dependent sulphite reductase flavoprotein subunit CysJ family. The protein in the N-terminal section; belongs to the flavodoxin family. It in the C-terminal section; belongs to the flavoprotein pyridine nucleotide cytochrome reductase family. In terms of assembly, alpha(8)-beta(8). The alpha component is a flavoprotein, the beta component is a hemoprotein. Requires FAD as cofactor. FMN serves as cofactor.

It catalyses the reaction hydrogen sulfide + 3 NADP(+) + 3 H2O = sulfite + 3 NADPH + 4 H(+). It participates in sulfur metabolism; hydrogen sulfide biosynthesis; hydrogen sulfide from sulfite (NADPH route): step 1/1. Functionally, component of the sulfite reductase complex that catalyzes the 6-electron reduction of sulfite to sulfide. This is one of several activities required for the biosynthesis of L-cysteine from sulfate. The flavoprotein component catalyzes the electron flow from NADPH -&gt; FAD -&gt; FMN to the hemoprotein component. The polypeptide is Sulfite reductase [NADPH] flavoprotein alpha-component (Yersinia pestis bv. Antiqua (strain Nepal516)).